The sequence spans 377 residues: Citrate synthase (377 aa).

Active-site residues include His-220, His-259, and Asp-313.

Belongs to the citrate synthase family. In terms of assembly, homodimer.

It catalyses the reaction oxaloacetate + acetyl-CoA + H2O = citrate + CoA + H(+). Its pathway is carbohydrate metabolism; tricarboxylic acid cycle; isocitrate from oxaloacetate: step 1/2. Functionally, might regulate the synthesis and function of enzymes involved in later enzymatic steps of Krebs cycle. Loss in activity results in sporulation defect. This Deinococcus radiodurans (strain ATCC 13939 / DSM 20539 / JCM 16871 / CCUG 27074 / LMG 4051 / NBRC 15346 / NCIMB 9279 / VKM B-1422 / R1) protein is Citrate synthase (gltA).